Consider the following 641-residue polypeptide: Chaperone protein DnaK (641 aa).

A Phosphothreonine; by autocatalysis modification is found at T199. Residues 577–590 (KGDNKDEIETRTQK) show a composition bias toward basic and acidic residues. A disordered region spans residues 577–641 (KGDNKDEIET…EFEEVDDKKK (65 aa)). The segment covering 617 to 626 (GAEQASAQQD) has biased composition (low complexity). Acidic residues predominate over residues 627 to 641 (DVVDAEFEEVDDKKK).

The protein belongs to the heat shock protein 70 family.

In terms of biological role, acts as a chaperone. The protein is Chaperone protein DnaK of Thioalkalivibrio sulfidiphilus (strain HL-EbGR7).